We begin with the raw amino-acid sequence, 607 residues long: Hemagglutinin glycoprotein (607 aa).

Residues methionine 1–phenylalanine 38 are Intravirion-facing. The chain crosses the membrane as a helical; Signal-anchor for type II membrane protein span at residues leucine 39–isoleucine 55. The Virion surface portion of the chain corresponds to threonine 56–proline 607. N-linked (GlcNAc...) asparagine; by host glycosylation is found at asparagine 149, asparagine 276, asparagine 391, asparagine 422, asparagine 456, and asparagine 587.

Belongs to the paramyxoviruses hemagglutinin-neuraminidase family. Non-sialidase subfamily.

Its subcellular location is the virion membrane. It is found in the host membrane. Its function is as follows. Attaches the virus to cell receptors and thereby initiating infection. Binding of H protein to the receptor induces a conformational change that allows the F protein to trigger virion/cell membranes fusion. In Phocidae (true seals), this protein is Hemagglutinin glycoprotein (H).